Reading from the N-terminus, the 397-residue chain is ORC1-type DNA replication protein 8 (397 aa).

Residues 61-65, Y211, and R223 each bind ATP; that span reads VGKTA.

The protein belongs to the CDC6/cdc18 family.

Functionally, involved in regulation of DNA replication. The polypeptide is ORC1-type DNA replication protein 8 (orc8) (Halobacterium salinarum (strain ATCC 700922 / JCM 11081 / NRC-1) (Halobacterium halobium)).